A 472-amino-acid polypeptide reads, in one-letter code: Glutamate--tRNA ligase (472 aa).

Positions 9-19 (PSPTGYLHVGG) match the 'HIGH' region motif. The Zn(2+) site is built by cysteine 98, cysteine 100, cysteine 125, and histidine 127. A 'KMSKS' region motif is present at residues 237–241 (KLSKR). Lysine 240 serves as a coordination point for ATP.

Belongs to the class-I aminoacyl-tRNA synthetase family. Glutamate--tRNA ligase type 1 subfamily. As to quaternary structure, monomer. It depends on Zn(2+) as a cofactor.

Its subcellular location is the cytoplasm. It catalyses the reaction tRNA(Glu) + L-glutamate + ATP = L-glutamyl-tRNA(Glu) + AMP + diphosphate. Functionally, catalyzes the attachment of glutamate to tRNA(Glu) in a two-step reaction: glutamate is first activated by ATP to form Glu-AMP and then transferred to the acceptor end of tRNA(Glu). In Klebsiella pneumoniae (strain 342), this protein is Glutamate--tRNA ligase.